A 1297-amino-acid chain; its full sequence is Phosphoribosylformylglycinamidine synthase (1297 aa).

Positions 301–329 are disordered; the sequence is TAISPFPGAATGSGGEIRDEGATGRGAKP. 308–319 is an ATP binding site; it reads GAATGSGGEIRD. Mg(2+) is bound by residues aspartate 680, glutamate 719, asparagine 723, and aspartate 887. Serine 889 is a binding site for ATP. The region spanning 1045–1297 is the Glutamine amidotransferase type-1 domain; the sequence is IAILREQGVN…RLFRNARMVF (253 aa). Cysteine 1138 (nucleophile) is an active-site residue. Active-site residues include histidine 1263 and glutamate 1265.

This sequence in the N-terminal section; belongs to the FGAMS family. In terms of assembly, monomer.

Its subcellular location is the cytoplasm. It carries out the reaction N(2)-formyl-N(1)-(5-phospho-beta-D-ribosyl)glycinamide + L-glutamine + ATP + H2O = 2-formamido-N(1)-(5-O-phospho-beta-D-ribosyl)acetamidine + L-glutamate + ADP + phosphate + H(+). It functions in the pathway purine metabolism; IMP biosynthesis via de novo pathway; 5-amino-1-(5-phospho-D-ribosyl)imidazole from N(2)-formyl-N(1)-(5-phospho-D-ribosyl)glycinamide: step 1/2. In terms of biological role, phosphoribosylformylglycinamidine synthase involved in the purines biosynthetic pathway. Catalyzes the ATP-dependent conversion of formylglycinamide ribonucleotide (FGAR) and glutamine to yield formylglycinamidine ribonucleotide (FGAM) and glutamate. This chain is Phosphoribosylformylglycinamidine synthase, found in Haemophilus influenzae (strain ATCC 51907 / DSM 11121 / KW20 / Rd).